A 256-amino-acid polypeptide reads, in one-letter code: Calsenilin (256 aa).

A disordered region spans residues 1–20; that stretch reads MQPAKEVTKASDGSLLGDLG. Ser-14 bears the Phosphoserine mark. Lys-26 participates in a covalent cross-link: Glycyl lysine isopeptide (Lys-Gly) (interchain with G-Cter in SUMO1). S-palmitoyl cysteine attachment occurs at residues Cys-45 and Cys-46. Ser-60 is subject to Phosphoserine. Ser-63 carries the phosphoserine; by CK1 modification. The region spanning 67–123 is the EF-hand 1; degenerate domain; that stretch reads LELSTVRHQPEGLDQLQAQTKFTKKELQSLYRGFKNECPTGLVDEDTFKLIYAQFFP. Lys-90 is covalently cross-linked (Glycyl lysine isopeptide (Lys-Gly) (interchain with G-Cter in SUMO1)). EF-hand domains are found at residues 126 to 161, 162 to 197, and 210 to 245; these read DATTYAHFLFNAFDADGNGAIHFEDFVVGLSILLRG, TVHEKLKWAFNLYDINKDGYITKEEMLAIMKSIYDM, and APAEHVERFFEKMDRNQDGVVTIEEFLEACQKDENI. Ca(2+) contacts are provided by Asp-175, Asn-177, Asp-179, Tyr-181, Glu-186, Asp-223, Asn-225, Asp-227, and Glu-234. The segment at 243-256 is interaction with KCND2; sequence ENIMSSMQLFENVI.

This sequence belongs to the recoverin family. Binds to DNA as a homomultimer. Dimerization is induced by binding to calcium. Interacts with the C-terminus of PSEN1 and PSEN2 and with PSEN2 CTF subunit. Associates with KCN1. Component of heteromultimeric potassium channels. Identified in potassium channel complexes containing KCND1, KCND2, KCND3, KCNIP1, KCNIP2, KCNIP3, KCNIP4, DPP6 and DPP10. Interacts with KCND2 and KCND3. Palmitoylated. Palmitoylation enhances association with the plasma membrane. Post-translationally, proteolytically cleaved by caspase-3. In terms of processing, phosphorylation at Ser-63 inhibits cleavage by CASP3. Highly expressed in brain. Widely expressed at lower levels. Expression levels are elevated in brain cortex regions affected by Alzheimer disease.

It localises to the cytoplasm. Its subcellular location is the cell membrane. The protein localises to the endoplasmic reticulum. It is found in the golgi apparatus. The protein resides in the nucleus. Calcium-dependent transcriptional repressor that binds to the DRE element of genes including PDYN and FOS. Affinity for DNA is reduced upon binding to calcium and enhanced by binding to magnesium. Seems to be involved in nociception. Its function is as follows. Regulatory subunit of Kv4/D (Shal)-type voltage-gated rapidly inactivating A-type potassium channels, such as KCND2/Kv4.2 and KCND3/Kv4.3. Modulates channel expression at the cell membrane, gating characteristics, inactivation kinetics and rate of recovery from inactivation in a calcium-dependent and isoform-specific manner. In terms of biological role, may play a role in the regulation of PSEN2 proteolytic processing and apoptosis. Together with PSEN2 involved in modulation of amyloid-beta formation. This chain is Calsenilin (KCNIP3), found in Homo sapiens (Human).